The primary structure comprises 351 residues: GDP-mannose 4,6-dehydratase (351 aa).

Residues 11–16 (GVTGQD), 66–67 (DM), 88–92 (LAAQS), and tyrosine 103 contribute to the NADP(+) site. The active site involves threonine 135. Residues glutamate 137 and tyrosine 159 each act as nucleophile in the active site. NADP(+) contacts are provided by lysine 163, histidine 189, and arginine 194.

The protein belongs to the NAD(P)-dependent epimerase/dehydratase family. GDP-mannose 4,6-dehydratase subfamily. The cofactor is NADP(+).

It catalyses the reaction GDP-alpha-D-mannose = GDP-4-dehydro-alpha-D-rhamnose + H2O. It participates in nucleotide-sugar biosynthesis; GDP-L-fucose biosynthesis via de novo pathway; GDP-L-fucose from GDP-alpha-D-mannose: step 1/2. Functionally, catalyzes the conversion of GDP-D-mannose to GDP-4-dehydro-6-deoxy-D-mannose. The protein is GDP-mannose 4,6-dehydratase of Sinorhizobium fredii (strain HH103).